The primary structure comprises 195 residues: N-(5'-phosphoribosyl)anthranilate isomerase (195 aa).

It belongs to the TrpF family.

The catalysed reaction is N-(5-phospho-beta-D-ribosyl)anthranilate = 1-(2-carboxyphenylamino)-1-deoxy-D-ribulose 5-phosphate. It functions in the pathway amino-acid biosynthesis; L-tryptophan biosynthesis; L-tryptophan from chorismate: step 3/5. This is N-(5'-phosphoribosyl)anthranilate isomerase from Methanoregula boonei (strain DSM 21154 / JCM 14090 / 6A8).